Reading from the N-terminus, the 265-residue chain is Keratinocyte-associated transmembrane protein 2 (265 aa).

A signal peptide spans 1–49 (MAAAALKRMRGPAQAKLLPGSAIQALVGLARPLVLALLLVSAALSSVVS). The Extracellular segment spans residues 50–196 (RTDSPSPTVL…MPSSNIEEED (147 aa)). Positions 72–96 (THENQTKPSISQISTTLPPTMSTEK) are enriched in polar residues. Disordered stretches follow at residues 72-123 (THEN…EDPS) and 135-168 (SPSTAKDTLDNGDYGEPDYDWTTGPRDDDESDDT). Residue asparagine 75 is glycosylated (N-linked (GlcNAc...) asparagine). Residues 114–123 (EEADNNEDPS) show a composition bias toward acidic residues. The chain crosses the membrane as a helical span at residues 197 to 217 (SHFFFHLIIFAFCIAVVYITY). Topologically, residues 218-265 (HNKRKIFLLVQSRKWRDGLCSKTVEYHRLDQNVNEAMPSLKITNDYTF) are cytoplasmic. Phosphoserine occurs at positions 229 and 256.

Its subcellular location is the membrane. The chain is Keratinocyte-associated transmembrane protein 2 (KCT2) from Pongo abelii (Sumatran orangutan).